The chain runs to 437 residues: Zinc finger protein 491 (437 aa).

Residues 35–59 form a C2H2-type 1; degenerate zinc finger; sequence KSCESGTCGEIFMGYSSFNRNIRTD. Residues 103–125 form a C2H2-type 2; degenerate zinc finger; sequence FDCKECEKSFISPASIRRYMVTH. 11 consecutive C2H2-type zinc fingers follow at residues 131–153, 159–181, 187–209, 215–237, 243–265, 271–293, 299–321, 327–349, 355–377, 383–405, and 411–433; these read YKCK…ERTH, YECK…ERTH, YECK…MRMH, HKCK…ERSH, DGCK…GRTH, YECK…ERIH, and YQCK…ERTH.

This sequence belongs to the krueppel C2H2-type zinc-finger protein family.

It is found in the nucleus. May be involved in transcriptional regulation. This is Zinc finger protein 491 (ZNF491) from Homo sapiens (Human).